A 499-amino-acid chain; its full sequence is Glycerol kinase (499 aa).

T12 serves as a coordination point for ADP. ATP-binding residues include T12, T13, and S14. T12 provides a ligand contact to sn-glycerol 3-phosphate. Residue R16 participates in ADP binding. Residues R82, E83, Y134, and D245 each coordinate sn-glycerol 3-phosphate. Glycerol is bound by residues R82, E83, Y134, D245, and Q246. ADP-binding residues include T267 and G311. 4 residues coordinate ATP: T267, G311, Q315, and G412. ADP contacts are provided by G412 and N416.

This sequence belongs to the FGGY kinase family.

The catalysed reaction is glycerol + ATP = sn-glycerol 3-phosphate + ADP + H(+). It participates in polyol metabolism; glycerol degradation via glycerol kinase pathway; sn-glycerol 3-phosphate from glycerol: step 1/1. Its activity is regulated as follows. Inhibited by fructose 1,6-bisphosphate (FBP). Its function is as follows. Key enzyme in the regulation of glycerol uptake and metabolism. Catalyzes the phosphorylation of glycerol to yield sn-glycerol 3-phosphate. The sequence is that of Glycerol kinase from Acidiphilium cryptum (strain JF-5).